Consider the following 505-residue polypeptide: Beta-glucosidase 18 (505 aa).

The signal sequence occupies residues 1–26 (MAGGSKTRIHASLVSTLLLLLPLASA). Gln-46 contacts a beta-D-glucoside. Asn-55 carries N-linked (GlcNAc...) asparagine glycosylation. Residues His-148 and 193-194 (NE) each bind a beta-D-glucoside. The Proton donor role is filled by Glu-194. A disulfide bridge links Cys-213 with Cys-220. Tyr-337 lines the a beta-D-glucoside pocket. Residues Cys-345 and Cys-350 are joined by a disulfide bond. Residues Glu-408, Trp-457, 464-465 (EW), and Phe-473 each bind a beta-D-glucoside. Glu-408 (nucleophile) is an active-site residue.

It belongs to the glycosyl hydrolase 1 family. Expressed in roots, leaves, flowers and pollen.

The enzyme catalyses Hydrolysis of terminal, non-reducing beta-D-glucosyl residues with release of beta-D-glucose.. In terms of biological role, hydrolyzes glycosides and monolignol glucosides. Can hydrolyze para-nitrophenyl beta-D-glucopyranoside (pNPGlc) in vitro. Hydrolyzes para-nitrophenyl beta-D-fucopyranoside, para-nitrophenyl beta-D-galactopyranoside and para-nitrophenyl beta-D-xylopyranoside in vitro. Hydrolyzes the monolignol glucosides coniferin and syringin with high catalytic efficiencies. The sequence is that of Beta-glucosidase 18 from Oryza sativa subsp. japonica (Rice).